The primary structure comprises 89 residues: Putative protein T-ENOL (89 aa).

Disordered regions lie at residues 1-31 (MAST…KASL) and 54-89 (RSHM…TDTR).

Specifically expressed in testis (at protein level).

The polypeptide is Putative protein T-ENOL (Rattus norvegicus (Rat)).